Here is a 211-residue protein sequence, read N- to C-terminus: Protein-L-isoaspartate O-methyltransferase (211 aa).

Ser62 is a catalytic residue.

The protein belongs to the methyltransferase superfamily. L-isoaspartyl/D-aspartyl protein methyltransferase family.

Its subcellular location is the cytoplasm. The enzyme catalyses [protein]-L-isoaspartate + S-adenosyl-L-methionine = [protein]-L-isoaspartate alpha-methyl ester + S-adenosyl-L-homocysteine. Catalyzes the methyl esterification of L-isoaspartyl residues in peptides and proteins that result from spontaneous decomposition of normal L-aspartyl and L-asparaginyl residues. It plays a role in the repair and/or degradation of damaged proteins. In Shewanella baltica (strain OS223), this protein is Protein-L-isoaspartate O-methyltransferase.